Here is a 187-residue protein sequence, read N- to C-terminus: GTP cyclohydrolase 1 (187 aa).

Zn(2+)-binding residues include Cys-78, His-81, and Cys-149.

This sequence belongs to the GTP cyclohydrolase I family. Toroid-shaped homodecamer, composed of two pentamers of five dimers.

The catalysed reaction is GTP + H2O = 7,8-dihydroneopterin 3'-triphosphate + formate + H(+). It participates in cofactor biosynthesis; 7,8-dihydroneopterin triphosphate biosynthesis; 7,8-dihydroneopterin triphosphate from GTP: step 1/1. In Wolinella succinogenes (strain ATCC 29543 / DSM 1740 / CCUG 13145 / JCM 31913 / LMG 7466 / NCTC 11488 / FDC 602W) (Vibrio succinogenes), this protein is GTP cyclohydrolase 1.